The sequence spans 215 residues: Redox-sensing transcriptional repressor Rex 2 (215 aa).

Residues 15–54 constitute a DNA-binding region (H-T-H motif); that stretch reads VYLRYLKMLGDSGVKRIKSREFSEMIQIPSATIRRDFSHV. 89-94 contributes to the NAD(+) binding site; sequence GCGNLG.

This sequence belongs to the transcriptional regulatory Rex family. In terms of assembly, homodimer.

It localises to the cytoplasm. Its function is as follows. Modulates transcription in response to changes in cellular NADH/NAD(+) redox state. This is Redox-sensing transcriptional repressor Rex 2 from Enterococcus faecalis (strain ATCC 700802 / V583).